The sequence spans 321 residues: Peroxidase 28 (321 aa).

Residues 1-21 (MKIATFSVLLLLLFIFPVALA) form the signal peptide. Cystine bridges form between Cys-32-Cys-111, Cys-65-Cys-70, Cys-117-Cys-317, and Cys-196-Cys-228. The Proton acceptor role is filled by His-63. The Ca(2+) site is built by Asp-64, Val-67, Gly-69, Asp-71, and Ser-73. Position 159 (Pro-159) interacts with substrate. His-189 serves as a coordination point for heme b. Ca(2+) is bound at residue Thr-190. Positions 238, 244, and 249 each coordinate Ca(2+).

Belongs to the peroxidase family. Classical plant (class III) peroxidase subfamily. Heme b serves as cofactor. Ca(2+) is required as a cofactor.

It is found in the secreted. It catalyses the reaction 2 a phenolic donor + H2O2 = 2 a phenolic radical donor + 2 H2O. Functionally, removal of H(2)O(2), oxidation of toxic reductants, biosynthesis and degradation of lignin, suberization, auxin catabolism, response to environmental stresses such as wounding, pathogen attack and oxidative stress. These functions might be dependent on each isozyme/isoform in each plant tissue. This Arabidopsis thaliana (Mouse-ear cress) protein is Peroxidase 28 (PER28).